A 91-amino-acid polypeptide reads, in one-letter code: UPF0335 protein BRADO1188 (91 aa).

This sequence belongs to the UPF0335 family.

This Bradyrhizobium sp. (strain ORS 278) protein is UPF0335 protein BRADO1188.